Here is a 222-residue protein sequence, read N- to C-terminus: LexA repressor (222 aa).

Residues isoleucine 28–lysine 48 constitute a DNA-binding region (H-T-H motif). Catalysis depends on for autocatalytic cleavage activity residues serine 135 and lysine 172.

It belongs to the peptidase S24 family. As to quaternary structure, homodimer.

It carries out the reaction Hydrolysis of Ala-|-Gly bond in repressor LexA.. Represses a number of genes involved in the response to DNA damage (SOS response), including recA and lexA. In the presence of single-stranded DNA, RecA interacts with LexA causing an autocatalytic cleavage which disrupts the DNA-binding part of LexA, leading to derepression of the SOS regulon and eventually DNA repair. This is LexA repressor from Myxococcus xanthus (strain DK1622).